The chain runs to 329 residues: GTPase Obg (329 aa).

Residues 1–159 enclose the Obg domain; that stretch reads MQFIDEAKIF…MWVWLHLKLL (159 aa). The 168-residue stretch at 160–327 folds into the OBG-type G domain; the sequence is SDVGLVGLPN…LLANILSELQ (168 aa). GTP contacts are provided by residues 166–173, 191–195, 212–215, 279–282, and 308–310; these read GLPNAGKS, FTTLT, DIPG, TKTD, and SSY. Positions 173 and 193 each coordinate Mg(2+).

Belongs to the TRAFAC class OBG-HflX-like GTPase superfamily. OBG GTPase family. Monomer. Mg(2+) serves as cofactor.

Its subcellular location is the cytoplasm. In terms of biological role, an essential GTPase which binds GTP, GDP and possibly (p)ppGpp with moderate affinity, with high nucleotide exchange rates and a fairly low GTP hydrolysis rate. Plays a role in control of the cell cycle, stress response, ribosome biogenesis and in those bacteria that undergo differentiation, in morphogenesis control. This is GTPase Obg from Orientia tsutsugamushi (strain Ikeda) (Rickettsia tsutsugamushi).